Here is a 323-residue protein sequence, read N- to C-terminus: Arginase, hepatic (323 aa).

Residues H102, D125, H127, and D129 each coordinate Mn(2+). Residues 127–131 (HADIN), 138–140 (SGN), and D184 contribute to the substrate site. Mn(2+)-binding residues include D233 and D235. Residues T247 and E278 each coordinate substrate.

It belongs to the arginase family. Homotrimer. Requires Mn(2+) as cofactor.

The enzyme catalyses L-arginine + H2O = urea + L-ornithine. It participates in nitrogen metabolism; urea cycle; L-ornithine and urea from L-arginine: step 1/1. In Aquarana catesbeiana (American bullfrog), this protein is Arginase, hepatic.